The chain runs to 121 residues: UPF0102 protein Mvan_2202 (121 aa).

The protein belongs to the UPF0102 family.

This is UPF0102 protein Mvan_2202 from Mycolicibacterium vanbaalenii (strain DSM 7251 / JCM 13017 / BCRC 16820 / KCTC 9966 / NRRL B-24157 / PYR-1) (Mycobacterium vanbaalenii).